The sequence spans 430 residues: C4-dicarboxylate transport protein (430 aa).

The next 8 helical transmembrane spans lie at 9 to 29 (VLYV…HFYP), 45 to 65 (LIKM…IAGM), 79 to 99 (LLYF…ATHL), 149 to 169 (GEIL…AHLG), 185 to 205 (VLFG…FGAM), 223 to 243 (LIGT…GAIA), 308 to 328 (IYMT…LTWM), and 356 to 376 (AATL…ILGI).

The protein belongs to the dicarboxylate/amino acid:cation symporter (DAACS) (TC 2.A.23) family.

It is found in the cell inner membrane. Functionally, responsible for the transport of dicarboxylates such as succinate, fumarate, and malate from the periplasm across the membrane. The sequence is that of C4-dicarboxylate transport protein from Burkholderia orbicola (strain MC0-3).